The following is a 139-amino-acid chain: Transcription antitermination protein NusB (139 aa).

The protein belongs to the NusB family.

In terms of biological role, involved in transcription antitermination. Required for transcription of ribosomal RNA (rRNA) genes. Binds specifically to the boxA antiterminator sequence of the ribosomal RNA (rrn) operons. In Klebsiella pneumoniae (strain 342), this protein is Transcription antitermination protein NusB.